Consider the following 222-residue polypeptide: Phosphoribosylformylglycinamidine synthase subunit PurQ (222 aa).

In terms of domain architecture, Glutamine amidotransferase type-1 spans 3–222 (SAVVLLPGLN…LFEGALGIAA (220 aa)). C86 (nucleophile) is an active-site residue. Residues H196 and E198 contribute to the active site.

Part of the FGAM synthase complex composed of 1 PurL, 1 PurQ and 2 PurS subunits.

It is found in the cytoplasm. It carries out the reaction N(2)-formyl-N(1)-(5-phospho-beta-D-ribosyl)glycinamide + L-glutamine + ATP + H2O = 2-formamido-N(1)-(5-O-phospho-beta-D-ribosyl)acetamidine + L-glutamate + ADP + phosphate + H(+). The catalysed reaction is L-glutamine + H2O = L-glutamate + NH4(+). Its pathway is purine metabolism; IMP biosynthesis via de novo pathway; 5-amino-1-(5-phospho-D-ribosyl)imidazole from N(2)-formyl-N(1)-(5-phospho-D-ribosyl)glycinamide: step 1/2. Part of the phosphoribosylformylglycinamidine synthase complex involved in the purines biosynthetic pathway. Catalyzes the ATP-dependent conversion of formylglycinamide ribonucleotide (FGAR) and glutamine to yield formylglycinamidine ribonucleotide (FGAM) and glutamate. The FGAM synthase complex is composed of three subunits. PurQ produces an ammonia molecule by converting glutamine to glutamate. PurL transfers the ammonia molecule to FGAR to form FGAM in an ATP-dependent manner. PurS interacts with PurQ and PurL and is thought to assist in the transfer of the ammonia molecule from PurQ to PurL. The sequence is that of Phosphoribosylformylglycinamidine synthase subunit PurQ from Mesorhizobium japonicum (strain LMG 29417 / CECT 9101 / MAFF 303099) (Mesorhizobium loti (strain MAFF 303099)).